Reading from the N-terminus, the 303-residue chain is Protein SULFUR DEFICIENCY-INDUCED 2 (303 aa).

Positions 62 to 89 (RVDSALKDMALLMKQQNRAEEAIDAIQS) form a coiled coil. TPR repeat units lie at residues 64 to 97 (DSAL…CSRQ), 100 to 133 (ESLD…IYQG), 160 to 193 (SRIL…EPDA), and 195 to 226 (KACN…ENKE). Residues 232-253 (RLMARVQELLSELKPQEEEAAA) adopt a coiled-coil conformation.

It belongs to the MS5 protein family.

It localises to the nucleus. Involved in the utilization of stored sulfate under sulfur-deficient conditions. The polypeptide is Protein SULFUR DEFICIENCY-INDUCED 2 (Arabidopsis thaliana (Mouse-ear cress)).